The primary structure comprises 152 residues: Cell division protein SepF (152 aa).

Residues Glu-23–Gln-32 show a composition bias toward basic and acidic residues. The tract at residues Glu-23 to Lys-42 is disordered.

The protein belongs to the SepF family. As to quaternary structure, homodimer. Interacts with FtsZ.

It is found in the cytoplasm. Cell division protein that is part of the divisome complex and is recruited early to the Z-ring. Probably stimulates Z-ring formation, perhaps through the cross-linking of FtsZ protofilaments. Its function overlaps with FtsA. This is Cell division protein SepF from Listeria welshimeri serovar 6b (strain ATCC 35897 / DSM 20650 / CCUG 15529 / CIP 8149 / NCTC 11857 / SLCC 5334 / V8).